Reading from the N-terminus, the 341-residue chain is L-threonine 3-dehydrogenase (341 aa).

Residue Cys-38 coordinates Zn(2+). Residues Thr-40 and His-43 each act as charge relay system in the active site. The Zn(2+) site is built by His-63, Glu-64, Cys-93, Cys-96, Cys-99, and Cys-107. Residues Ile-175, Asp-195, Arg-200, Leu-262–Ile-264, and Ile-286–Tyr-287 each bind NAD(+).

Belongs to the zinc-containing alcohol dehydrogenase family. In terms of assembly, homotetramer. Zn(2+) is required as a cofactor.

The protein resides in the cytoplasm. The catalysed reaction is L-threonine + NAD(+) = (2S)-2-amino-3-oxobutanoate + NADH + H(+). It participates in amino-acid degradation; L-threonine degradation via oxydo-reductase pathway; glycine from L-threonine: step 1/2. Its function is as follows. Catalyzes the NAD(+)-dependent oxidation of L-threonine to 2-amino-3-ketobutyrate. This Edwardsiella ictaluri (strain 93-146) protein is L-threonine 3-dehydrogenase.